Here is a 249-residue protein sequence, read N- to C-terminus: 23S rRNA (guanosine-2'-O-)-methyltransferase RlmB (249 aa).

3 residues coordinate S-adenosyl-L-methionine: Gly-200, Ile-220, and Leu-229.

The protein belongs to the class IV-like SAM-binding methyltransferase superfamily. RNA methyltransferase TrmH family. RlmB subfamily.

The protein resides in the cytoplasm. It carries out the reaction guanosine(2251) in 23S rRNA + S-adenosyl-L-methionine = 2'-O-methylguanosine(2251) in 23S rRNA + S-adenosyl-L-homocysteine + H(+). Its function is as follows. Specifically methylates the ribose of guanosine 2251 in 23S rRNA. The sequence is that of 23S rRNA (guanosine-2'-O-)-methyltransferase RlmB from Xanthomonas campestris pv. campestris (strain ATCC 33913 / DSM 3586 / NCPPB 528 / LMG 568 / P 25).